The primary structure comprises 702 residues: MADS-box MEF2 type transcription factor MIG1 (702 aa).

Residues 1–61 (MGRRKIEIKA…KKLYEYSSGD (61 aa)) form the MADS-box domain. Disordered stretches follow at residues 73–608 (GGAT…NIDT) and 658–702 (PSFL…KVDS). Residues 86 to 96 (GGDDDDEEEGD) are compositionally biased toward acidic residues. Residues 132 to 144 (ASPPIPNGVPFPP) are compositionally biased toward pro residues. Residues 145–155 (HGHGVPRGHTP) show a composition bias toward low complexity. Positions 180-195 (GSPQVNGFGFGQQQSM) are enriched in polar residues. Residues 201–241 (TTMPPHMPPQMAPGPPFPYPQHPQHPPHPPHPPHPPHPQQP) show a composition bias toward pro residues. Low complexity-rich tracts occupy residues 273–284 (PMGMQRHSVSPP), 326–343 (ESPQ…QQPE), and 350–371 (EQQQ…QSEP). Residues 456-465 (VDESTSNASE) show a composition bias toward polar residues. 2 stretches are compositionally biased toward low complexity: residues 487–512 (RASI…SLRA) and 530–553 (DGSG…DATS). A compositionally biased stretch (polar residues) spans 554-567 (QSTRQNDSHSSTNM). The span at 587–600 (PPNPFAPKRPPQHP) shows a compositional bias: pro residues. The segment covering 693-702 (NEPKRVKVDS) has biased composition (basic and acidic residues).

Belongs to the MEF2 family. As to quaternary structure, interacts with MAPK MPS1.

It localises to the nucleus. Functionally, transcription factor acting downstream of the MPS1 MAP kinase (MAPK) cascade during conidiation and plant infection. Required for overcoming plant defense responses and the differentiation of secondary infectious hyphae in live plant cells. This chain is MADS-box MEF2 type transcription factor MIG1, found in Pyricularia oryzae (Rice blast fungus).